We begin with the raw amino-acid sequence, 306 residues long: Reticulocalbin-2 (306 aa).

The N-terminal stretch at 1-22 is a signal peptide; it reads MESPTLLGLLLLLLGGPGTSLG. EF-hand domains lie at 50–85, 86–121, 144–173, 175–210, 226–251, and 252–287; these read EQQKRLKVIISRIDVDLDGFLTEAELSSWIQHSFKS, YIIEDAKQQFQHYDKDGDGRVSWEEYNIQMYDRVID, KKRFQKANKDGDSHLDFEEFAAFEHPEEAD, MKEFVIQESLEEHDKDGDGFVSLQEFLGDYRRDPAA, NDYDKDKDGKLSPKELLTWVMPNNEG, and LAQEEAVHLLDEMDLDGDRRLSANEILENQDLFLNS. Residues aspartate 99, aspartate 101, aspartate 103, arginine 105, and glutamate 110 each contribute to the Ca(2+) site. 14 residues coordinate Ca(2+): aspartate 188, aspartate 190, aspartate 192, glutamate 199, aspartate 229, aspartate 231, aspartate 233, lysine 235, glutamate 240, aspartate 265, aspartate 267, aspartate 269, arginine 271, and glutamate 276.

Belongs to the CREC family. May bind phospholipase A2, since the rat reticulocalbin-2 has been isolated on the phospholipase complex taipoxin columns. As to expression, expressed by the venom gland.

It is found in the secreted. The protein is Reticulocalbin-2 of Crotalus adamanteus (Eastern diamondback rattlesnake).